Consider the following 641-residue polypeptide: Single-strand DNA endonuclease 1 (641 aa).

The N-domain stretch occupies residues M1–R90. The XPG-N domain stretch occupies residues G2–A97. D30, D76, E144, E146, D165, D167, and D217 together coordinate Mg(2+). Positions M132–D217 are XPG-I domain. I-domain regions lie at residues M132–N220 and M132–G221. Positions D217–L350 are 5'-3' exonuclease domain. 2 disordered regions span residues K428–V448 and V572–H615. The segment covering D580–A590 has biased composition (gly residues).

It belongs to the XPG/RAD2 endonuclease family. GEN subfamily. Mg(2+) serves as cofactor. As to expression, highly expressed in shoot apical meristem (SAM) and young leaves. Expressed in roots, flag leaf and panicles.

It localises to the nucleus. Single-stranded DNA endonuclease activity in vitro. May not be active as double-stranded DNA endonuclease. Endonuclease which cleaves flap structures at the junction between single-stranded DNA and double-stranded DNA with a specific cleavage site in the 5' overhang strand exactly one nucleotide 3' of the branch point. Structure- and sequence-specific nuclease that resolves holliday junctions (HJs) by symmetrically oriented incisions in two opposing strands near the junction point, thus leading to ligatable products; HJs are physical links between homologous DNA molecules that arise as central intermediary structures during homologous recombination and repair in meiotic and somatic cells. Probably involved in the resolution of toxic replication structures to ensure genome stability, and to maintain telomere integrity and replication. This Oryza sativa subsp. japonica (Rice) protein is Single-strand DNA endonuclease 1.